The sequence spans 319 residues: MKSKAKVAIIGPGNIGTDLMIKVMRHGTHIEMGAMIGVDPKSDGLARAQRMGVAISSDGIDGLLALDVFKEIDIVFDATSAGAHKRHNDVLQAHGVQVIDLTPAAIGPYVIPAINLESENAPNMNMVTCGGQATIPMVAAISRVTKVHYAEIVASISSKSAGPGTRANIDEFTETTRKAIEQLGGASRGKAIIILNPAEPPLIMRDTVFALSDPADQGKIEDSIAQMVASVQAYVPGYRLKQKVQFDVITADKPLNVPGVGLKHGLKTSVFLEVEGAAHYLPSYAGNLDIMTSAALACGDMMARRRMAAGIARGHKEAV.

The Acyl-thioester intermediate role is filled by Cys-129. Residues 160 to 168 (SAGPGTRAN) and Asn-287 each bind NAD(+).

This sequence belongs to the acetaldehyde dehydrogenase family.

The enzyme catalyses acetaldehyde + NAD(+) + CoA = acetyl-CoA + NADH + H(+). In Burkholderia lata (strain ATCC 17760 / DSM 23089 / LMG 22485 / NCIMB 9086 / R18194 / 383), this protein is Acetaldehyde dehydrogenase 1.